A 311-amino-acid polypeptide reads, in one-letter code: MAGPLWRTAAFVQRHRTGLLVGSCAGLFGVPISYHLFPDPVVQWLYQYWPQGQPAPLPPQLQSLFQEVLQDIGVPSGHCYKPFTTFTFQPVSAGFPRLPAGAVVGIPASFLGDLVINTNHPVVIHGHTVDWRSPAGARLRASLTLSREAQKFALAREVVYLESSTTAVHALLAPACLAGTWALGVGAKYTLGLHAGPMNLRAAFSLVAAVAGFVAYAFSQDSLTHAVESWLDRRTASLSAAYACGGVEFYEKLLSGNLALRSLLGKDGEKLYTPSGNIVPRHLFRIKHLPYTTRRDSVLQMWRGMLNPGRS.

At 1–17 (MAGPLWRTAAFVQRHRT) the chain is on the mitochondrial matrix side. Residues 18–38 (GLLVGSCAGLFGVPISYHLFP) traverse the membrane as a helical segment. Topologically, residues 39–166 (DPVVQWLYQY…EVVYLESSTT (128 aa)) are mitochondrial intermembrane. The chain crosses the membrane as a helical span at residues 167 to 187 (AVHALLAPACLAGTWALGVGA). The Mitochondrial matrix segment spans residues 188–197 (KYTLGLHAGP). The helical transmembrane segment at 198 to 218 (MNLRAAFSLVAAVAGFVAYAF) threads the bilayer. At 219 to 311 (SQDSLTHAVE…WRGMLNPGRS (93 aa)) the chain is on the mitochondrial intermembrane side.

The protein belongs to the TMEM177 family. Found in a complex with COX20, COA6, MT-CO2/COX2, COX18, SCO1 and SCO2. Interacts with COX20. Interacts with COX1, MT-CO2/COX2, SCO1 and SCO2 in a COX20-dependent manner.

It is found in the mitochondrion inner membrane. Its function is as follows. Plays a role in the early steps of cytochrome c oxidase subunit II (MT-CO2/COX2) maturation and is required for the stabilization of COX20 and the newly synthesized MT-CO2/COX2 protein. This chain is Transmembrane protein 177 (TMEM177), found in Homo sapiens (Human).